The primary structure comprises 526 residues: GMP synthase [glutamine-hydrolyzing] (526 aa).

Residues 9 to 208 (RILILDFGSQ…LVNICGCKQL (200 aa)) enclose the Glutamine amidotransferase type-1 domain. The active-site Nucleophile is cysteine 86. Residues histidine 182 and glutamate 184 contribute to the active site. A GMPS ATP-PPase domain is found at 209 to 401 (WTPGRIIEDA…LGLPYDMVYR (193 aa)). Residue 236-242 (SGGVDSS) participates in ATP binding.

In terms of assembly, homodimer.

It catalyses the reaction XMP + L-glutamine + ATP + H2O = GMP + L-glutamate + AMP + diphosphate + 2 H(+). It functions in the pathway purine metabolism; GMP biosynthesis; GMP from XMP (L-Gln route): step 1/1. Catalyzes the synthesis of GMP from XMP. The chain is GMP synthase [glutamine-hydrolyzing] from Hahella chejuensis (strain KCTC 2396).